Here is a 459-residue protein sequence, read N- to C-terminus: Chromosomal replication initiator protein DnaA (459 aa).

The domain I, interacts with DnaA modulators stretch occupies residues M1–E74. A domain II region spans residues E74–S122. Residues A91–R123 are disordered. Basic and acidic residues predominate over residues P96–H112. A domain III, AAA+ region region spans residues R123–S339. G167, G169, K170, and T171 together coordinate ATP. A domain IV, binds dsDNA region spans residues R340–G459.

The protein belongs to the DnaA family. Oligomerizes as a right-handed, spiral filament on DNA at oriC.

Its subcellular location is the cytoplasm. Its function is as follows. Plays an essential role in the initiation and regulation of chromosomal replication. ATP-DnaA binds to the origin of replication (oriC) to initiate formation of the DNA replication initiation complex once per cell cycle. Binds the DnaA box (a 9 base pair repeat at the origin) and separates the double-stranded (ds)DNA. Forms a right-handed helical filament on oriC DNA; dsDNA binds to the exterior of the filament while single-stranded (ss)DNA is stabiized in the filament's interior. The ATP-DnaA-oriC complex binds and stabilizes one strand of the AT-rich DNA unwinding element (DUE), permitting loading of DNA polymerase. After initiation quickly degrades to an ADP-DnaA complex that is not apt for DNA replication. Binds acidic phospholipids. This Nitrosomonas eutropha (strain DSM 101675 / C91 / Nm57) protein is Chromosomal replication initiator protein DnaA.